The sequence spans 1047 residues: Carbamoyl phosphate synthase large chain (1047 aa).

Residues 1–398 are carboxyphosphate synthetic domain; the sequence is MPRRDDIHRI…ALMKAIASLD (398 aa). Residues Arg-129, Arg-169, Gly-175, Gly-176, Glu-208, Leu-210, Glu-215, Gly-241, Val-242, His-243, Gln-284, and Glu-296 each coordinate ATP. The region spanning 133 to 325 is the ATP-grasp 1 domain; it reads YEFLKAMGEP…IARIAAKIAA (193 aa). Mg(2+) contacts are provided by Gln-284, Glu-296, and Asn-298. 3 residues coordinate Mn(2+): Gln-284, Glu-296, and Asn-298. The tract at residues 399-539 is oligomerization domain; sequence NAFSSNIRLH…YSTYEDEDET (141 aa). Residues 540–916 are carbamoyl phosphate synthetic domain; that stretch reads PDLSGSIMII…ALRKSLQRSI (377 aa). One can recognise an ATP-grasp 2 domain in the interval 665 to 854; sequence SRVIEGLGIK…WVRLAVECMI (190 aa). ATP contacts are provided by Arg-701, Lys-738, Leu-740, Glu-745, Gly-770, Val-771, His-772, Ser-773, Gln-813, and Glu-825. Mg(2+)-binding residues include Gln-813, Glu-825, and Asn-827. The Mn(2+) site is built by Gln-813, Glu-825, and Asn-827. The 138-residue stretch at 910 to 1047 folds into the MGS-like domain; that stretch reads KSLQRSISSV…REIGDYLQVS (138 aa). Positions 916 to 1047 are allosteric domain; that stretch reads ISSVLITVRD…REIGDYLQVS (132 aa).

It belongs to the CarB family. In terms of assembly, composed of two chains; the small (or glutamine) chain promotes the hydrolysis of glutamine to ammonia, which is used by the large (or ammonia) chain to synthesize carbamoyl phosphate. Tetramer of heterodimers (alpha,beta)4. The cofactor is Mg(2+). Mn(2+) serves as cofactor.

It catalyses the reaction hydrogencarbonate + L-glutamine + 2 ATP + H2O = carbamoyl phosphate + L-glutamate + 2 ADP + phosphate + 2 H(+). The enzyme catalyses hydrogencarbonate + NH4(+) + 2 ATP = carbamoyl phosphate + 2 ADP + phosphate + 2 H(+). The protein operates within amino-acid biosynthesis; L-arginine biosynthesis; carbamoyl phosphate from bicarbonate: step 1/1. It participates in pyrimidine metabolism; UMP biosynthesis via de novo pathway; (S)-dihydroorotate from bicarbonate: step 1/3. Large subunit of the glutamine-dependent carbamoyl phosphate synthetase (CPSase). CPSase catalyzes the formation of carbamoyl phosphate from the ammonia moiety of glutamine, carbonate, and phosphate donated by ATP, constituting the first step of 2 biosynthetic pathways, one leading to arginine and/or urea and the other to pyrimidine nucleotides. The large subunit (synthetase) binds the substrates ammonia (free or transferred from glutamine from the small subunit), hydrogencarbonate and ATP and carries out an ATP-coupled ligase reaction, activating hydrogencarbonate by forming carboxy phosphate which reacts with ammonia to form carbamoyl phosphate. This chain is Carbamoyl phosphate synthase large chain, found in Thermoplasma acidophilum (strain ATCC 25905 / DSM 1728 / JCM 9062 / NBRC 15155 / AMRC-C165).